The sequence spans 429 residues: Serine--tRNA ligase (429 aa).

235 to 237 (TAE) provides a ligand contact to L-serine. 266–268 (RSE) lines the ATP pocket. Glutamate 289 provides a ligand contact to L-serine. 353–356 (EISS) is a binding site for ATP. Serine 389 contributes to the L-serine binding site.

This sequence belongs to the class-II aminoacyl-tRNA synthetase family. Type-1 seryl-tRNA synthetase subfamily. As to quaternary structure, homodimer. The tRNA molecule binds across the dimer.

It is found in the cytoplasm. It carries out the reaction tRNA(Ser) + L-serine + ATP = L-seryl-tRNA(Ser) + AMP + diphosphate + H(+). The catalysed reaction is tRNA(Sec) + L-serine + ATP = L-seryl-tRNA(Sec) + AMP + diphosphate + H(+). It participates in aminoacyl-tRNA biosynthesis; selenocysteinyl-tRNA(Sec) biosynthesis; L-seryl-tRNA(Sec) from L-serine and tRNA(Sec): step 1/1. Catalyzes the attachment of serine to tRNA(Ser). Is also able to aminoacylate tRNA(Sec) with serine, to form the misacylated tRNA L-seryl-tRNA(Sec), which will be further converted into selenocysteinyl-tRNA(Sec). This Haemophilus influenzae (strain 86-028NP) protein is Serine--tRNA ligase.